A 241-amino-acid chain; its full sequence is Octanoyltransferase (241 aa).

The BPL/LPL catalytic domain occupies 49–233 (GEASELVWLL…AFGEVFGPSE (185 aa)). Residues 87–94 (RGGQVTYH), 162–164 (AIG), and 175–177 (GIS) each bind substrate. C193 functions as the Acyl-thioester intermediate in the catalytic mechanism.

This sequence belongs to the LipB family.

Its subcellular location is the cytoplasm. The enzyme catalyses octanoyl-[ACP] + L-lysyl-[protein] = N(6)-octanoyl-L-lysyl-[protein] + holo-[ACP] + H(+). The protein operates within protein modification; protein lipoylation via endogenous pathway; protein N(6)-(lipoyl)lysine from octanoyl-[acyl-carrier-protein]: step 1/2. In terms of biological role, catalyzes the transfer of endogenously produced octanoic acid from octanoyl-acyl-carrier-protein onto the lipoyl domains of lipoate-dependent enzymes. Lipoyl-ACP can also act as a substrate although octanoyl-ACP is likely to be the physiological substrate. The protein is Octanoyltransferase of Nitrobacter hamburgensis (strain DSM 10229 / NCIMB 13809 / X14).